The following is a 67-amino-acid chain: Beta-defensin 123 (67 aa).

A signal peptide spans 1-20 (MKLLLLTLTVLLLLSQLTPG). 3 disulfides stabilise this stretch: Cys-25/Cys-52, Cys-32/Cys-46, and Cys-36/Cys-53.

This sequence belongs to the beta-defensin family. Abundant expression in the male reproductive tract only. Expressed abundantly in testis, while expression in epididymis decreased gradually from caput to cauda.

The protein localises to the secreted. Its function is as follows. Has antibacterial activity. This chain is Beta-defensin 123 (DEFB123), found in Macaca mulatta (Rhesus macaque).